We begin with the raw amino-acid sequence, 605 residues long: Glycerophosphodiester phosphodiesterase domain-containing protein 5 (605 aa).

Residues 1 to 42 (MVRHQPLQYYEPQLCLSCLTGIYGCRWKRYQRSHDDTTPWER) lie on the Cytoplasmic side of the membrane. Intrachain disulfides connect cysteine 15–cysteine 18 and cysteine 25–cysteine 571. A helical membrane pass occupies residues 43 to 63 (LWFLLLTFTFGLTLTWLYFWW). Residues 64-89 (EVHNDYDEFNWYLYNRMGYWSDWPVP) lie on the Extracellular side of the membrane. The chain crosses the membrane as a helical span at residues 90-110 (ILVTTAAAFAYIAGLLVLALC). Residues 111 to 125 (HIAVGQQMNLHWLHK) lie on the Cytoplasmic side of the membrane. The helical transmembrane segment at 126 to 146 (IGLVVILASTVVAMSAVAQLW) threads the bilayer. The Extracellular segment spans residues 147–160 (EDEWEVLLISLQGT). A helical membrane pass occupies residues 161–181 (APFLHVGAVAAVTMLSWIVAG). Topologically, residues 182–192 (QFARAERTSSQ) are cytoplasmic. The helical transmembrane segment at 193-213 (VTILCTFFTVVFALYLAPLTI) threads the bilayer. Residues 214-496 (SSPCIMEKKD…PLWIMPPDEY (283 aa)) are Extracellular-facing. A GP-PDE domain is found at 228–485 (PALIGHRGAP…DNSHALSQVP (258 aa)). Residues asparagine 301, asparagine 336, asparagine 352, asparagine 374, and asparagine 448 are each glycosylated (N-linked (GlcNAc...) asparagine). The chain crosses the membrane as a helical span at residues 497–517 (CLMWVTADLVSFTLIVGIFVL). Over 518–605 (QKWRLGGIRS…TKTLIERSGR (88 aa)) the chain is Cytoplasmic. The interval 582-605 (STATPVGPRGGGSHTKTLIERSGR) is disordered.

This sequence belongs to the glycerophosphoryl diester phosphodiesterase family. Interacts with PRDX1; forms a mixed-disulfide with PRDX1, leading to disrupt intramolecular disulfide bond between Cys-25 and Cys-571. Intramolecular disulfide bond between Cys-25 and Cys-571 is reduced by PRDX1.

It localises to the endomembrane system. It is found in the cytoplasm. The protein localises to the perinuclear region. Its subcellular location is the cell projection. The protein resides in the growth cone. The enzyme catalyses a 1,2-diacyl-sn-glycero-3-phospho-(1D-myo-inositol-4,5-bisphosphate) + H2O = 1D-myo-inositol 1,4,5-trisphosphate + a 1,2-diacyl-sn-glycerol + H(+). It carries out the reaction sn-glycerol 3-phosphocholine + H2O = sn-glycerol 3-phosphate + choline + H(+). Functionally, glycerophosphodiester phosphodiesterase that promotes neurite formation and drives spinal motor neuron differentiation. Mediates the cleavage of glycosylphosphatidylinositol (GPI) anchor of target proteins: removes the GPI-anchor of RECK, leading to release RECK from the plasma membrane. May contribute to the osmotic regulation of cellular glycerophosphocholine. This Homo sapiens (Human) protein is Glycerophosphodiester phosphodiesterase domain-containing protein 5.